The chain runs to 70 residues: UPF0150 protein TM_1311 (70 aa).

It belongs to the UPF0150 family.

This chain is UPF0150 protein TM_1311, found in Thermotoga maritima (strain ATCC 43589 / DSM 3109 / JCM 10099 / NBRC 100826 / MSB8).